A 381-amino-acid chain; its full sequence is Subtilisin E (381 aa).

The first 29 residues, 1–29, serve as a signal peptide directing secretion; the sequence is MRSKKLWISLLFALTLIFTMAFSNMSAQA. Positions 30 to 106 are excised as a propeptide; the sequence is AGKSSTEKKY…VEEDHIAHEY (77 aa). The 66-residue stretch at 38-103 folds into the Inhibitor I9 domain; the sequence is KYIVGFKQTM…VAYVEEDHIA (66 aa). Residue Gln-108 coordinates Ca(2+). In terms of domain architecture, Peptidase S8 spans 111-380; that stretch reads PYGISQIKAP…KGLINVQAAA (270 aa). The active-site Charge relay system is Asp-138. Asp-147 contacts Ca(2+). His-170 acts as the Charge relay system in catalysis. Residues Leu-181, Asn-183, Ile-185, Val-187, Ala-275, Tyr-277, Thr-280, and Asp-303 each coordinate Ca(2+). Residue Ser-327 is the Charge relay system of the active site.

This sequence belongs to the peptidase S8 family. Requires Ca(2+) as cofactor.

It localises to the secreted. It carries out the reaction Hydrolysis of proteins with broad specificity for peptide bonds, and a preference for a large uncharged residue in P1. Hydrolyzes peptide amides.. Its activity is regulated as follows. Inhibited by PMSF (phenylmethylsulphonyl fluoride) and 3,4-dichloroisocoumarin but not by EDTA (shown for strain RT-5). Its function is as follows. An extracellular alkaline serine protease, it catalyzes the hydrolysis of proteins and peptide amides. The sequence is that of Subtilisin E from Bacillus subtilis (strain 168).